Reading from the N-terminus, the 345-residue chain is Phosphate acyltransferase (345 aa).

Belongs to the PlsX family. As to quaternary structure, homodimer. Probably interacts with PlsY.

The protein resides in the cytoplasm. It catalyses the reaction a fatty acyl-[ACP] + phosphate = an acyl phosphate + holo-[ACP]. It functions in the pathway lipid metabolism; phospholipid metabolism. In terms of biological role, catalyzes the reversible formation of acyl-phosphate (acyl-PO(4)) from acyl-[acyl-carrier-protein] (acyl-ACP). This enzyme utilizes acyl-ACP as fatty acyl donor, but not acyl-CoA. In Dichelobacter nodosus (strain VCS1703A), this protein is Phosphate acyltransferase.